A 514-amino-acid polypeptide reads, in one-letter code: MKRGLEEEIEEMSEEEVGVNNNNNGKKKKKKVVKKSKPVPLTKSVPQVSSQPLRPTKLVPKKKTEIREININDIGSNELSVADQRVEADGVLAGLISPTIIEDFYDQYFGQKHLYVKRNGDNIYKNFFTKDSLDKMLRNNLMKFTENVDVTNYVDFQRITLNPEGRAYPSLVWKHYKEGCSVRLLNPQTFNSNVWKLCSTLQTHFQCGVGANIYLTPAGAQGFAPHYDDVDVFILQLEGKKEWRLYKPRDANEVLPKKSSENFTQEEIGEPYFTVTLEAGDLLYFPRGVIHQAVSPSDVHSLHITVSTYLNNTWGDLIGKVLNRALEIANEECLEFREGLPRDYTQYLGVIHSDKVGDERRKELTDKVGTLWDKLGQLLPIDIGADQMAVKYLLDSLPPVLTQLEKKHSIEDETTSMKIKPETRFRLIRADSVRLVVEDIAILFHNADNTRIYHQVGEEPGVVEFTLECVDALEHIIDSYPSYIYTKDLPIEDDDQKLDVVSALYEKGLIMFEK.

The segment at 1-53 is disordered; sequence MKRGLEEEIEEMSEEEVGVNNNNNGKKKKKKVVKKSKPVPLTKSVPQVSSQPL. A compositionally biased stretch (acidic residues) spans 7–17; it reads EEIEEMSEEEV. Positions 25-37 are enriched in basic residues; that stretch reads GKKKKKKVVKKSK. The segment covering 44–53 has biased composition (polar residues); the sequence is SVPQVSSQPL. The JmjC domain occupies 180 to 327; it reads CSVRLLNPQT…IGKVLNRALE (148 aa). The Fe cation site is built by His226, Asp228, and His291.

The protein belongs to the ROX family. NO66 subfamily. Fe(2+) serves as cofactor.

It is found in the nucleus. It catalyses the reaction N(6),N(6)-dimethyl-L-lysyl(36)-[histone H3] + 2 2-oxoglutarate + 2 O2 = L-lysyl(36)-[histone H3] + 2 formaldehyde + 2 succinate + 2 CO2. Functionally, oxygenase that can act as both a histone lysine demethylase and a ribosomal histidine hydroxylase. Specifically demethylates 'Lys-4' (H3K4me) and 'Lys-36' (H3K36me) of histone H3, thereby playing a central role in histone code. In Dictyostelium discoideum (Social amoeba), this protein is Bifunctional lysine-specific demethylase and histidyl-hydroxylase NO66 (jcdg).